The chain runs to 130 residues: MTADLPDFVPDFEKTGGLVPAIAQDAVSGEVLMMAWMNEEAWHRTLTTGEAHYFSRSRGSLWHKGGTSGHTQHIRAVRLDCDSDTILLLVDQIGGAACHKGYKSCFFRELKDGEISVCSPLVFDPEEVYK.

Residue D80 participates in Mg(2+) binding. Residue C81 coordinates Zn(2+). Mg(2+)-binding residues include D82 and D84. The Zn(2+) site is built by C98 and C105.

This sequence belongs to the PRA-CH family. As to quaternary structure, homodimer. Mg(2+) serves as cofactor. Requires Zn(2+) as cofactor.

It localises to the cytoplasm. It catalyses the reaction 1-(5-phospho-beta-D-ribosyl)-5'-AMP + H2O = 1-(5-phospho-beta-D-ribosyl)-5-[(5-phospho-beta-D-ribosylamino)methylideneamino]imidazole-4-carboxamide. It participates in amino-acid biosynthesis; L-histidine biosynthesis; L-histidine from 5-phospho-alpha-D-ribose 1-diphosphate: step 3/9. Its function is as follows. Catalyzes the hydrolysis of the adenine ring of phosphoribosyl-AMP. The polypeptide is Phosphoribosyl-AMP cyclohydrolase (Oleidesulfovibrio alaskensis (strain ATCC BAA-1058 / DSM 17464 / G20) (Desulfovibrio alaskensis)).